Reading from the N-terminus, the 105-residue chain is Heat shock protein HspQ (105 aa).

The protein belongs to the HspQ family.

It is found in the cytoplasm. Functionally, involved in the degradation of certain denaturated proteins, including DnaA, during heat shock stress. This is Heat shock protein HspQ from Blochmanniella pennsylvanica (strain BPEN).